Consider the following 362-residue polypeptide: UDP-N-acetylglucosamine--N-acetylmuramyl-(pentapeptide) pyrophosphoryl-undecaprenol N-acetylglucosamine transferase (362 aa).

Residues 11–13 (TGG), Asn124, Arg163, Ser191, Ile246, and Gln291 each bind UDP-N-acetyl-alpha-D-glucosamine.

The protein belongs to the glycosyltransferase 28 family. MurG subfamily.

The protein localises to the cell inner membrane. It catalyses the reaction di-trans,octa-cis-undecaprenyl diphospho-N-acetyl-alpha-D-muramoyl-L-alanyl-D-glutamyl-meso-2,6-diaminopimeloyl-D-alanyl-D-alanine + UDP-N-acetyl-alpha-D-glucosamine = di-trans,octa-cis-undecaprenyl diphospho-[N-acetyl-alpha-D-glucosaminyl-(1-&gt;4)]-N-acetyl-alpha-D-muramoyl-L-alanyl-D-glutamyl-meso-2,6-diaminopimeloyl-D-alanyl-D-alanine + UDP + H(+). Its pathway is cell wall biogenesis; peptidoglycan biosynthesis. Functionally, cell wall formation. Catalyzes the transfer of a GlcNAc subunit on undecaprenyl-pyrophosphoryl-MurNAc-pentapeptide (lipid intermediate I) to form undecaprenyl-pyrophosphoryl-MurNAc-(pentapeptide)GlcNAc (lipid intermediate II). The protein is UDP-N-acetylglucosamine--N-acetylmuramyl-(pentapeptide) pyrophosphoryl-undecaprenol N-acetylglucosamine transferase of Idiomarina loihiensis (strain ATCC BAA-735 / DSM 15497 / L2-TR).